Here is a 295-residue protein sequence, read N- to C-terminus: WHI2-like protein P4H10.16c (295 aa).

This sequence belongs to the WHI2 family.

It localises to the cytoplasm. It is found in the nucleus. This chain is WHI2-like protein P4H10.16c, found in Schizosaccharomyces pombe (strain 972 / ATCC 24843) (Fission yeast).